Consider the following 390-residue polypeptide: Chorismate synthase 2 (390 aa).

Arg39 and Arg45 together coordinate NADP(+). Residues 132-134 (RSS), 253-254 (NA), Gly298, 313-317 (KPIPT), and Arg339 each bind FMN.

Belongs to the chorismate synthase family. Homotetramer. FMNH2 serves as cofactor.

It carries out the reaction 5-O-(1-carboxyvinyl)-3-phosphoshikimate = chorismate + phosphate. The protein operates within metabolic intermediate biosynthesis; chorismate biosynthesis; chorismate from D-erythrose 4-phosphate and phosphoenolpyruvate: step 7/7. Functionally, catalyzes the anti-1,4-elimination of the C-3 phosphate and the C-6 proR hydrogen from 5-enolpyruvylshikimate-3-phosphate (EPSP) to yield chorismate, which is the branch point compound that serves as the starting substrate for the three terminal pathways of aromatic amino acid biosynthesis. This reaction introduces a second double bond into the aromatic ring system. This Bacillus cereus (strain ZK / E33L) protein is Chorismate synthase 2.